A 479-amino-acid polypeptide reads, in one-letter code: T-box transcription factor TBX1 (479 aa).

Composition is skewed to low complexity over residues 15 to 31 (ASSL…ADPF) and 59 to 86 (YPFA…AAAV). The tract at residues 15 to 86 (ASSLSGLGSP…GPGASRAAAV (72 aa)) is disordered. A DNA-binding region (T-box) is located at residues 108–286 (LWDEFNQLGT…SNPFAKGFRD (179 aa)). A disordered region spans residues 311–398 (RNPVASPTQP…APGASEPLHH (88 aa)). Residues 313 to 322 (PVASPTQPNG) are compositionally biased toward polar residues. Basic and acidic residues predominate over residues 323–338 (SDKDAAEARREFDRDS). The Nuclear localization signal motif lies at 415–426 (KSRPAPYPLPGL).

Binds DNA as a dimer. Interacts with DSCR6. Interacts with NKX2-5. As to expression, expressed in skeletal muscle, lung and testis. Highly expressed in hair follicle stem cell, but not in terminally differentiating cells.

It localises to the nucleus. Its function is as follows. Transcription factor that plays a key role in cardiovascular development by promoting pharyngeal arch segmentation during embryonic development. Also involved in craniofacial muscle development. Together with NKX2-5, acts as a regulator of asymmetric cardiac morphogenesis by promoting expression of PITX2. Acts upstream of TBX1 for the formation of the thymus and parathyroid glands from the third pharyngeal pouch. Required for hair follicle stem cell self-renewal. Binds to the palindromic T site 5'-TTCACACCTAGGTGTGAA-3' DNA sequence. The polypeptide is T-box transcription factor TBX1 (Mus musculus (Mouse)).